Here is a 439-residue protein sequence, read N- to C-terminus: uncharacterized protein (439 aa).

The N-terminal stretch at 1–19 is a signal peptide; the sequence is MKKLLLTASIICLASAGLA.

This is an uncharacterized protein from Rickettsia felis (strain ATCC VR-1525 / URRWXCal2) (Rickettsia azadi).